Consider the following 473-residue polypeptide: GTPase Der (473 aa).

2 consecutive EngA-type G domains span residues F3–E167 and L203–N378. GTP-binding positions include G9–S16, D56–L60, N119–E122, G209–S216, D256–M260, and N321–D324. Positions A379–H463 constitute a KH-like domain.

Belongs to the TRAFAC class TrmE-Era-EngA-EngB-Septin-like GTPase superfamily. EngA (Der) GTPase family. In terms of assembly, associates with the 50S ribosomal subunit.

In terms of biological role, GTPase that plays an essential role in the late steps of ribosome biogenesis. The sequence is that of GTPase Der from Parvibaculum lavamentivorans (strain DS-1 / DSM 13023 / NCIMB 13966).